A 224-amino-acid polypeptide reads, in one-letter code: MSDKKAVILLSGGLDSATVVAMARAEGYACYSMSFDYGQRHRAELQAAERVARQLGVVEHKVVGLNLNGIGGSALTDSSIAVPETPGEGIPVTYVPARNTVFLSLALGWAEVLGARDIFIGVNAVDYSGYPDCRPEFVEAFERMANLATKAGVEGQGFAIRAPLQQMSKGEIIQAGMRLGVDYALTVSCYQADDDGRACGKCDSCRLRAAGFAAAGVPDATRYF.

10-20 (LSGGLDSATVV) provides a ligand contact to ATP. Residues Cys189, Cys199, Cys202, and Cys205 each contribute to the Zn(2+) site.

The protein belongs to the QueC family. Requires Zn(2+) as cofactor.

The enzyme catalyses 7-carboxy-7-deazaguanine + NH4(+) + ATP = 7-cyano-7-deazaguanine + ADP + phosphate + H2O + H(+). It participates in purine metabolism; 7-cyano-7-deazaguanine biosynthesis. Its function is as follows. Catalyzes the ATP-dependent conversion of 7-carboxy-7-deazaguanine (CDG) to 7-cyano-7-deazaguanine (preQ(0)). The sequence is that of 7-cyano-7-deazaguanine synthase from Ectopseudomonas mendocina (strain ymp) (Pseudomonas mendocina).